The sequence spans 347 residues: MSLIDQLNQLEYEALAALEQIADLTALAEWKSAYLGKQGALSRLSRGLGALPAEERPVAGARFNAARATLEQALERAEAQLKRIARQHAFEADQVDVTLPGRAPAVGRLHPTTQMLRTIYGILGEMGFQVWESPEVETDEFNFQLLNMPPDHPARDMWDTFYVETAPGEPTLLLRTHTSPGQIYAMRANAPNPVRAILPGKCYRYEQVTARHEMQFYQVEGIAIGEQISFSDLKGTLVAFAERLYGKGVKTRFRPSYFPFTEPSVEFDIECFLCGGAGCRVCKQSGWLEILGAGMIHPVVLRNGGYDPDTVSGFAFGMGPERMAMLRYGIDDIRWFFSGDERFLQQF.

Glutamate 262 provides a ligand contact to Mg(2+).

Belongs to the class-II aminoacyl-tRNA synthetase family. Phe-tRNA synthetase alpha subunit type 1 subfamily. As to quaternary structure, tetramer of two alpha and two beta subunits. The cofactor is Mg(2+).

It is found in the cytoplasm. The enzyme catalyses tRNA(Phe) + L-phenylalanine + ATP = L-phenylalanyl-tRNA(Phe) + AMP + diphosphate + H(+). This chain is Phenylalanine--tRNA ligase alpha subunit, found in Roseiflexus sp. (strain RS-1).